The chain runs to 123 residues: Large ribosomal subunit protein uL18 (123 aa).

It belongs to the universal ribosomal protein uL18 family. As to quaternary structure, part of the 50S ribosomal subunit; part of the 5S rRNA/L5/L18/L25 subcomplex. Contacts the 5S and 23S rRNAs.

In terms of biological role, this is one of the proteins that bind and probably mediate the attachment of the 5S RNA into the large ribosomal subunit, where it forms part of the central protuberance. The chain is Large ribosomal subunit protein uL18 from Wolbachia pipientis subsp. Culex pipiens (strain wPip).